Consider the following 208-residue polypeptide: Ribonuclease HII (208 aa).

One can recognise an RNase H type-2 domain in the interval 18–208 (GFYAGVDEVG…RPVKERLEAC (191 aa)). Residues Asp-24, Glu-25, and Asp-116 each coordinate a divalent metal cation.

This sequence belongs to the RNase HII family. Mn(2+) serves as cofactor. Requires Mg(2+) as cofactor.

The protein localises to the cytoplasm. It carries out the reaction Endonucleolytic cleavage to 5'-phosphomonoester.. Functionally, endonuclease that specifically degrades the RNA of RNA-DNA hybrids. The chain is Ribonuclease HII from Shewanella loihica (strain ATCC BAA-1088 / PV-4).